A 219-amino-acid polypeptide reads, in one-letter code: Probable GTP-binding protein EngB (219 aa).

The region spanning 31-205 (VGVEIAFAGR…LSILNEWCHP (175 aa)) is the EngB-type G domain. Residues 39–46 (GRSNAGKS), 66–70 (GRTQL), 84–87 (DLPG), 151–154 (TKSD), and 184–186 (FSA) each bind GTP. Residues S46 and T68 each coordinate Mg(2+).

The protein belongs to the TRAFAC class TrmE-Era-EngA-EngB-Septin-like GTPase superfamily. EngB GTPase family. Requires Mg(2+) as cofactor.

Necessary for normal cell division and for the maintenance of normal septation. In Shewanella sp. (strain ANA-3), this protein is Probable GTP-binding protein EngB.